The primary structure comprises 1033 residues: MAQGFAVGFDPLGLGDLSSGSLSSLSSRGHLGSDSGSTATRYLLRKQQRLLNGPPRGIRASSPMGRVILINSPIEANSDESDIIHSVRVEKSPAGRLGFSVRGGSEHGLGIFVSKVEEGSSAERAGLCVGDKITEVNGLSLESTTMGSAVKVLTSSSRLHMMVRRMGRVPGIKFSKEKTTWVDVVNRRLVVEKCGSTPSDTSSEDGVRRIVHLYTTSDDFCLGFNIRGGKEFGLGIYVSKVDHGGLAEENGIKVGDQVLAANGVRFDDISHSQAVEVLKGQTHIMLTIKETGRYPAYKEMVSEYCWLDRLSNGVLQQLSPASESSSSVSSCASSAPYSSGSLPSDRMDICLGQEEPGSRGPGWGRADTAMQTEPDAGGRVETWCSVRPTVILRDTAIRSDGPHPGRRLDSALSESPKTALLLALSRPRPPITRSQSYLTLWEEKQQRKKEKSGSPGEKGALQRSKTLMNLFFKGGRQGRLARDGRREAWTLDSGSLAKTYPRLDIEKAGGVGPVQKFVTWRLRRDQERGRALLSARSGSPSSQLPNVDEQVQAWESRRPLIQDLAQRLLTDDEVLAVTRHCSRYVHEGGIEDLVRPLLAILDRPEKLLLLQDIRSVVAPTDLGRFDSMVMLVELEAFEALKSRAVRPPALRPARQDTPPKRHLITPVPDSRGGFYLLPVNGFPEEEDNGELRERLGALKVSPSASAPRHPHKGIPPLQDVPVDAFTPLRIACTPPPQLPPVAPRPLRPNWLLTEPLSREHPPQSQIRGRAQSRSRSRSRSRSRSSRGQGKSPGRRSPSPVPTPAPSMTNGRYHKPRKARPPLPRPLDGEAAKVGAKQGPSESGTEGTAKEAAMKNPSGELKTVTLSKMKQSLGISISGGIESKVQPMVKIEKIFPGGAAFLSGALQAGFELVAVDGENLEQVTHQRAVDTIRRAYRNKAREPMELVVRVPGPSPRPSPSDSSALTDGGLPADHLPAHQPLDAAPVPAHWLPEPPTNPQTPPTDARLLQPTPSPAPSPALQTPDSKPAPSPRIP.

PDZ domains follow at residues Ser86–Arg168 and Ile210–Arg293. Over residues Glu323–Ser344 the composition is skewed to low complexity. Disordered stretches follow at residues Glu323 to Val380, Lys444 to Ser464, Glu754 to Thr864, and Met943 to Pro1033. A compositionally biased stretch (basic residues) spans Ala770 to Ser784. Positions Ser785–Pro797 are enriched in low complexity. The region spanning Thr862–Ala934 is the PDZ 3 domain. Residues Pro991 to Pro1000 are compositionally biased toward pro residues.

As to quaternary structure, homodimerizes (via PDZ2 domain). Component of USH2 complex, composed of ADGRV1, PDZD7, USH2A and WHRN. Interacts (via PDZ domains) with WHRN; the interaction is direct. Interacts with USH1G. Interacts with ADGRV1 (via the cytoplasmic region). Interacts with USH2A (via the cytoplasmic region). Interacts with MYO7A (via MyTH4-FERM domains). In terms of tissue distribution, weakly expressed in the inner ear. Expressed in the retinal pigment epithelium.

It is found in the cell projection. Its subcellular location is the cilium. The protein resides in the nucleus. The protein localises to the stereocilium. In terms of biological role, in cochlear developing hair cells, essential in organizing the USH2 complex at stereocilia ankle links. Blocks inhibition of adenylate cyclase activity mediated by ADGRV1. This is PDZ domain-containing protein 7 from Homo sapiens (Human).